A 340-amino-acid polypeptide reads, in one-letter code: MRWARQAVAVNGMPVDDGALPGLQRIGLVRSVRAPQFDGITFHEVLCKSALNKVPNAAALPFRYTVNGYRGCSHACRYCFARPTHEYLDFNPGTDFDTQVVVKTNVAAVLRHELRRPSWRRETVALGTNTDPYQRAEGRYALMPGIIGALAASGTPLSILTKGTLLRRDLPLIAEAAQQVPVSVAVSLAVGDPELHRDVESGTPTPQARLALITAIRAAGLDCHVMVAPVLPQLTDSGEHLDQLLGQIAAAGATGVTVFGLHLRGSTRGWFMCWLARAHPELVSRYRELYRRGPYLPPSYREMLRERVAPLIAKYRLAGDHRPAPPETEAALVPVQATLF.

The 250-residue stretch at 58 to 307 (AALPFRYTVN…PSYREMLRER (250 aa)) folds into the Radical SAM core domain. 3 residues coordinate [4Fe-4S] cluster: cysteine 72, cysteine 76, and cysteine 79. The next 2 membrane-spanning stretches (helical) occupy residues 140–160 (YALM…LSIL) and 243–263 (QLLG…GLHL).

Requires [4Fe-4S] cluster as cofactor.

It localises to the cell membrane. This is an uncharacterized protein from Mycobacterium tuberculosis (strain CDC 1551 / Oshkosh).